Reading from the N-terminus, the 322-residue chain is MTEARPIILTCGEPAGVGPELAPKALASGVPFVFLGDPRHLPEGTAWAEVTAPGEPVADGVLAVLRHDFPAPARPGQPDPANAPAVIEVIARAVDLAMSGAAGGICTLPINKEALKRGAGFGFPGHTEYLAHLAGDVPVVMMLASTTVQPPCRVVPVTIHIPLSEVPLALTPLRLEQAIRITDAAMRRDFGLAQPRLAIAGLNPHAGENGVMGDEEARWMAPLIERLRREGFDLRGPLPADTMFHPAARARYDAALCAYHDQALIPIKTLDFAGGVNITLGLPFVRTSPDHGTAFDIAGQGIADAESVIAALRMAHEMAARR.

Positions 126 and 127 each coordinate substrate. A divalent metal cation is bound by residues His-160, His-205, and His-260. The substrate site is built by Lys-268, Asn-277, and Arg-286.

It belongs to the PdxA family. As to quaternary structure, homodimer. Requires Zn(2+) as cofactor. It depends on Mg(2+) as a cofactor. Co(2+) is required as a cofactor.

Its subcellular location is the cytoplasm. The catalysed reaction is 4-(phosphooxy)-L-threonine + NAD(+) = 3-amino-2-oxopropyl phosphate + CO2 + NADH. Its pathway is cofactor biosynthesis; pyridoxine 5'-phosphate biosynthesis; pyridoxine 5'-phosphate from D-erythrose 4-phosphate: step 4/5. Catalyzes the NAD(P)-dependent oxidation of 4-(phosphooxy)-L-threonine (HTP) into 2-amino-3-oxo-4-(phosphooxy)butyric acid which spontaneously decarboxylates to form 3-amino-2-oxopropyl phosphate (AHAP). In Paracoccus denitrificans (strain Pd 1222), this protein is 4-hydroxythreonine-4-phosphate dehydrogenase.